The chain runs to 293 residues: Ribonuclease HII (293 aa).

Residues 81-271 (THIAGVDEAG…VREALGLPTG (191 aa)) enclose the RNase H type-2 domain. A divalent metal cation is bound by residues Asp87, Glu88, and Asp180. The segment at 273–293 (PPSALQAELFPEAPSRTGVKS) is disordered.

Belongs to the RNase HII family. Requires Mn(2+) as cofactor. It depends on Mg(2+) as a cofactor.

It is found in the cytoplasm. The catalysed reaction is Endonucleolytic cleavage to 5'-phosphomonoester.. Endonuclease that specifically degrades the RNA of RNA-DNA hybrids. The polypeptide is Ribonuclease HII (Myxococcus xanthus (strain DK1622)).